The sequence spans 197 residues: Ribosomal RNA large subunit methyltransferase E (197 aa).

Positions 52, 54, 72, 88, and 112 each coordinate S-adenosyl-L-methionine. Lys-152 functions as the Proton acceptor in the catalytic mechanism.

This sequence belongs to the class I-like SAM-binding methyltransferase superfamily. RNA methyltransferase RlmE family.

The protein resides in the cytoplasm. The catalysed reaction is uridine(2552) in 23S rRNA + S-adenosyl-L-methionine = 2'-O-methyluridine(2552) in 23S rRNA + S-adenosyl-L-homocysteine + H(+). Its function is as follows. Specifically methylates the uridine in position 2552 of 23S rRNA at the 2'-O position of the ribose in the fully assembled 50S ribosomal subunit. This chain is Ribosomal RNA large subunit methyltransferase E, found in Nitrosopumilus maritimus (strain SCM1).